The sequence spans 113 residues: Dolichyl-diphosphooligosaccharide--protein glycosyltransferase subunit dad1 (113 aa).

At 1–30 the chain is on the cytoplasmic side; that stretch reads MSVSVFSVVSRFLDEYVSSTPQRLKLLDAY. Residues 31–51 form a helical membrane-spanning segment; sequence LLYILLTGALQFLYCLLVGTF. Residue Pro-52 is a topological domain, lumenal. Residues 53 to 73 form a helical membrane-spanning segment; it reads FNSFLSGFISSVGSFILAVCL. Topologically, residues 74 to 92 are cytoplasmic; sequence RIQINPQNKSDFQGISPER. A helical transmembrane segment spans residues 93-113; that stretch reads AFADFLFANTILHLVVVNFIG.

It belongs to the DAD/OST2 family. In terms of assembly, component of the oligosaccharyltransferase (OST) complex.

It is found in the endoplasmic reticulum membrane. It functions in the pathway protein modification; protein glycosylation. Functionally, subunit of the oligosaccharyl transferase (OST) complex that catalyzes the initial transfer of a defined glycan (Glc(3)Man(9)GlcNAc(2) in eukaryotes) from the lipid carrier dolichol-pyrophosphate to an asparagine residue within an Asn-X-Ser/Thr consensus motif in nascent polypeptide chains, the first step in protein N-glycosylation. N-glycosylation occurs cotranslationally and the complex associates with the Sec61 complex at the channel-forming translocon complex that mediates protein translocation across the endoplasmic reticulum (ER). All subunits are required for a maximal enzyme activity. The sequence is that of Dolichyl-diphosphooligosaccharide--protein glycosyltransferase subunit dad1 from Xenopus laevis (African clawed frog).